The sequence spans 151 residues: Regulatory protein RecX (151 aa).

This sequence belongs to the RecX family.

The protein localises to the cytoplasm. Its function is as follows. Modulates RecA activity. In Actinobacillus pleuropneumoniae serotype 5b (strain L20), this protein is Regulatory protein RecX.